The following is a 77-amino-acid chain: Translation initiation factor IF-1, chloroplastic (77 aa).

Positions 1–72 (MRKQNLIEME…TKGRITYRLR (72 aa)) constitute an S1-like domain.

Belongs to the IF-1 family. Component of the 30S ribosomal translation pre-initiation complex which assembles on the 30S ribosome in the order IF-2 and IF-3, IF-1 and N-formylmethionyl-tRNA(fMet); mRNA recruitment can occur at any time during PIC assembly.

It is found in the plastid. It localises to the chloroplast. In terms of biological role, one of the essential components for the initiation of protein synthesis. Stabilizes the binding of IF-2 and IF-3 on the 30S subunit to which N-formylmethionyl-tRNA(fMet) subsequently binds. Helps modulate mRNA selection, yielding the 30S pre-initiation complex (PIC). Upon addition of the 50S ribosomal subunit IF-1, IF-2 and IF-3 are released leaving the mature 70S translation initiation complex. The chain is Translation initiation factor IF-1, chloroplastic from Staurastrum punctulatum (Green alga).